Reading from the N-terminus, the 626-residue chain is Polygalacturonase 1 beta-like protein 3 (626 aa).

The first 23 residues, 1-23 (MLKQFLLLQSFSFFLFNVVIVGG), serve as a signal peptide directing secretion. Residues 117-120 (FSVY) form an FXXY 1 repeat. N-linked (GlcNAc...) asparagine glycosylation is present at asparagine 124. FXXY repeat units follow at residues 125 to 128 (FTNY), 139 to 142 (FKNY), 153 to 156 (FRRY), 167 to 170 (FTVY), 181 to 184 (FNSY), 195 to 198 (FTNY), 209 to 212 (FTAY), 223 to 226 (FKTY), 238 to 241 (FTSY), 252 to 255 (FTSY), and 266 to 269 (FSNY). Asparagine 141 carries an N-linked (GlcNAc...) asparagine glycan. Asparagine 277 carries N-linked (GlcNAc...) asparagine glycosylation. 7 FXXY repeats span residues 280-283 (FTSY), 294-297 (FNNY), 308-311 (FANY), 322-325 (FSSY), 336-339 (FVNY), 350-353 (FTGY), and 364-367 (FKTY). N-linked (GlcNAc...) asparagine glycosylation is present at asparagine 370. FXXY repeat units lie at residues 373–376 (FKDY) and 383–386 (FAKY). Asparagine 387 and asparagine 465 each carry an N-linked (GlcNAc...) asparagine glycan. Residues 411–625 (FFRESSLKEG…FENDMNWAIA (215 aa)) enclose the BURP domain.

Expressed in flowers and stems. Detected in trichomes, guard cells, root vascular tissue, root hairs, pollen sacs, sepals and styles of pistils.

It is found in the secreted. Its subcellular location is the extracellular space. The protein localises to the apoplast. It localises to the cell wall. Its function is as follows. Involved in cell size determination. May serve as a chaperone for expansins through the secretory pathway. The polypeptide is Polygalacturonase 1 beta-like protein 3 (Arabidopsis thaliana (Mouse-ear cress)).